We begin with the raw amino-acid sequence, 116 residues long: Classical arabinogalactan protein 25 (116 aa).

Residues 1-28 form the signal peptide; it reads MAFSFLNKLLIIFIFIFISLSSSSPTIS. Residues 40–95 are disordered; that stretch reads LLPSPGDALPSDDGSGTIPSSPSPPDPDTNDGSYPDPLAFSPFASPPVSSPSPPPS. 2 stretches are compositionally biased toward low complexity: residues 50 to 59 and 69 to 82; these read SDDGSGTIPS and NDGS…FSPF. Positions 83–95 are enriched in pro residues; the sequence is ASPPVSSPSPPPS. S89 carries GPI-anchor amidated serine lipidation. A propeptide spans 90 to 116 (removed in mature form); it reads PSPPPSLPSAGVLLISLIISSASFLAL.

This sequence belongs to the classical AGP family. In terms of processing, O-glycosylated on the hydroxyproline residues.

Its subcellular location is the cell membrane. Functionally, proteoglycan that seems to be implicated in diverse developmental roles such as differentiation, cell-cell recognition, embryogenesis and programmed cell death. This chain is Classical arabinogalactan protein 25 (AGP25), found in Arabidopsis thaliana (Mouse-ear cress).